The sequence spans 314 residues: Acetaldehyde dehydrogenase 3 (314 aa).

The active-site Acyl-thioester intermediate is the Cys-132. NAD(+)-binding positions include 163–171 (SAGPGTRAN) and Asn-291.

This sequence belongs to the acetaldehyde dehydrogenase family.

It carries out the reaction acetaldehyde + NAD(+) + CoA = acetyl-CoA + NADH + H(+). This Dechloromonas aromatica (strain RCB) protein is Acetaldehyde dehydrogenase 3.